We begin with the raw amino-acid sequence, 416 residues long: Glutamyl-tRNA reductase (416 aa).

Substrate contacts are provided by residues 49–52 (TCNR), S105, 110–112 (EPQ), and Q116. The active-site Nucleophile is the C50. 185 to 190 (GAGETI) serves as a coordination point for NADP(+).

Belongs to the glutamyl-tRNA reductase family. As to quaternary structure, homodimer.

It catalyses the reaction (S)-4-amino-5-oxopentanoate + tRNA(Glu) + NADP(+) = L-glutamyl-tRNA(Glu) + NADPH + H(+). It participates in porphyrin-containing compound metabolism; protoporphyrin-IX biosynthesis; 5-aminolevulinate from L-glutamyl-tRNA(Glu): step 1/2. In terms of biological role, catalyzes the NADPH-dependent reduction of glutamyl-tRNA(Glu) to glutamate 1-semialdehyde (GSA). The chain is Glutamyl-tRNA reductase from Shewanella frigidimarina (strain NCIMB 400).